We begin with the raw amino-acid sequence, 466 residues long: Asparagine--tRNA ligase (466 aa).

The protein belongs to the class-II aminoacyl-tRNA synthetase family. As to quaternary structure, homodimer.

The protein resides in the cytoplasm. The enzyme catalyses tRNA(Asn) + L-asparagine + ATP = L-asparaginyl-tRNA(Asn) + AMP + diphosphate + H(+). The polypeptide is Asparagine--tRNA ligase (Shewanella sediminis (strain HAW-EB3)).